A 446-amino-acid polypeptide reads, in one-letter code: Solute carrier family 52, riboflavin transporter, member 2 (446 aa).

4 consecutive transmembrane segments (helical) span residues 14-34 (LLVA…WVEL), 47-67 (LPSY…VVTL), 79-99 (APIQ…APLW), and 104-124 (VMAG…LALA). Asn129 carries an N-linked (GlcNAc...) asparagine glycan. 2 consecutive transmembrane segments (helical) span residues 147 to 167 (FFLG…GQGV) and 196 to 216 (FFGA…GLLL). The segment at 228–267 (GSGTGLRGGAPGVEEEEEEEASPLQEPPSQAAGNTPSPDP) is disordered. Positions 229-238 (SGTGLRGGAP) are enriched in gly residues. Residues 254–263 (PPSQAAGNTP) are compositionally biased toward polar residues. Helical transmembrane passes span 278-298 (ACLL…LPAV), 313-333 (LAVV…MGIL), 340-360 (LGGL…LAIL), 367-387 (VGTS…LGVF), and 405-425 (ALLA…VTMF).

The protein belongs to the riboflavin transporter family.

The protein localises to the cell membrane. The enzyme catalyses riboflavin(in) = riboflavin(out). Riboflavin transport is Na(+)-independent but moderately pH-sensitive. Activity is strongly inhibited by riboflavin analogs, such as lumiflavin. Weakly inhibited by flavin adenine dinucleotide (FAD) and flavin mononucleotide (FMN). Functionally, plasma membrane transporter mediating the uptake by cells of the water soluble vitamin B2/riboflavin that plays a key role in biochemical oxidation-reduction reactions of the carbohydrate, lipid, and amino acid metabolism. May also act as a receptor for 4-hydroxybutyrate. (Microbial infection) In case of infection by porcine endogenous retrovirus (PERV-A), acts as a cell receptor to retroviral envelopes. The sequence is that of Solute carrier family 52, riboflavin transporter, member 2 (SLC52A2) from Sus scrofa (Pig).